The primary structure comprises 276 residues: 4-hydroxy-tetrahydrodipicolinate reductase (276 aa).

Residues 18 to 23 (GASGRM) and D44 each bind NAD(+). Residue R45 coordinates NADP(+). NAD(+) is bound by residues 107 to 109 (GTT) and 131 to 134 (APNM). Catalysis depends on H164, which acts as the Proton donor/acceptor. H165 contacts (S)-2,3,4,5-tetrahydrodipicolinate. The active-site Proton donor is K168. Residue 174–175 (GT) participates in (S)-2,3,4,5-tetrahydrodipicolinate binding.

Belongs to the DapB family.

Its subcellular location is the cytoplasm. The enzyme catalyses (S)-2,3,4,5-tetrahydrodipicolinate + NAD(+) + H2O = (2S,4S)-4-hydroxy-2,3,4,5-tetrahydrodipicolinate + NADH + H(+). It catalyses the reaction (S)-2,3,4,5-tetrahydrodipicolinate + NADP(+) + H2O = (2S,4S)-4-hydroxy-2,3,4,5-tetrahydrodipicolinate + NADPH + H(+). It participates in amino-acid biosynthesis; L-lysine biosynthesis via DAP pathway; (S)-tetrahydrodipicolinate from L-aspartate: step 4/4. Its function is as follows. Catalyzes the conversion of 4-hydroxy-tetrahydrodipicolinate (HTPA) to tetrahydrodipicolinate. The chain is 4-hydroxy-tetrahydrodipicolinate reductase from Aromatoleum aromaticum (strain DSM 19018 / LMG 30748 / EbN1) (Azoarcus sp. (strain EbN1)).